Consider the following 476-residue polypeptide: Bifunctional protein HldE (476 aa).

The interval 1-318 (MKVTLPDFRR…ENAIRGRAET (318 aa)) is ribokinase. 195–198 (NLSE) provides a ligand contact to ATP. Asp264 is an active-site residue. The cytidylyltransferase stretch occupies residues 344-476 (MTNGIFDILH…IIQSIKNGRG (133 aa)).

This sequence in the N-terminal section; belongs to the carbohydrate kinase PfkB family. It in the C-terminal section; belongs to the cytidylyltransferase family. Homodimer.

The enzyme catalyses D-glycero-beta-D-manno-heptose 7-phosphate + ATP = D-glycero-beta-D-manno-heptose 1,7-bisphosphate + ADP + H(+). It catalyses the reaction D-glycero-beta-D-manno-heptose 1-phosphate + ATP + H(+) = ADP-D-glycero-beta-D-manno-heptose + diphosphate. Its pathway is nucleotide-sugar biosynthesis; ADP-L-glycero-beta-D-manno-heptose biosynthesis; ADP-L-glycero-beta-D-manno-heptose from D-glycero-beta-D-manno-heptose 7-phosphate: step 1/4. The protein operates within nucleotide-sugar biosynthesis; ADP-L-glycero-beta-D-manno-heptose biosynthesis; ADP-L-glycero-beta-D-manno-heptose from D-glycero-beta-D-manno-heptose 7-phosphate: step 3/4. Catalyzes the phosphorylation of D-glycero-D-manno-heptose 7-phosphate at the C-1 position to selectively form D-glycero-beta-D-manno-heptose-1,7-bisphosphate. Functionally, catalyzes the ADP transfer from ATP to D-glycero-beta-D-manno-heptose 1-phosphate, yielding ADP-D-glycero-beta-D-manno-heptose. The sequence is that of Bifunctional protein HldE from Yersinia pestis bv. Antiqua (strain Antiqua).